Consider the following 746-residue polypeptide: Histone-lysine N-methyltransferase EZH2 (746 aa).

Residues 1-340 are interaction with DNMT1, DNMT3A and DNMT3B; it reads MGQTGKKSEK…AKEFAAALTA (340 aa). Ser21 carries the phosphoserine; by PKB/AKT1 modification. Residues 39–68 are interaction with EED; it reads KSMFSSNRQKILERTEILNQEWKQRRIQPV. Ser75 is a glycosylation site (O-linked (GlcNAc) serine). At Ser76 the chain carries Phosphoserine. Residues 180-222 form a disordered region; that stretch reads QYNDDDDDDDGDDPEEREEKQKDLEDHRDDKESRPPRKFPSDK. A compositionally biased stretch (acidic residues) spans 182-195; it reads NDDDDDDDGDDPEE. Positions 196-222 are enriched in basic and acidic residues; that stretch reads REEKQKDLEDHRDDKESRPPRKFPSDK. The segment at 329-522 is interaction with CDYL; that stretch reads EGAKEFAAAL…SSNHVYNYQP (194 aa). Position 339 is a phosphothreonine (Thr339). Residues 340-426 are disordered; it reads AERIKTPPKR…PIKMKPNIEP (87 aa). Thr345 carries the post-translational modification Phosphothreonine; by CDK1 and CDK2. The span at 345-357 shows a compositional bias: basic residues; the sequence is TPPKRPGGRRRGR. Phosphoserine is present on residues Ser363 and Ser366. Position 367 is a phosphothreonine (Thr367). A compositionally biased stretch (basic and acidic residues) spans 374–385; sequence ESKDTDSDREAG. Thr487 carries the phosphothreonine modification. A CXC domain is found at 503–605; that stretch reads CRKIQLKKDG…SKNVSCKNCS (103 aa). Positions 612–727 constitute an SET domain; it reads KHLLLAPSDV…TGEELFFDYR (116 aa). A Glycyl lysine isopeptide (Lys-Gly) (interchain with G-Cter in SUMO2) cross-link involves residue Lys634.

It belongs to the class V-like SAM-binding methyltransferase superfamily. Histone-lysine methyltransferase family. EZ subfamily. In terms of assembly, component of the PRC2/EED-EZH2 complex, which includes EED, EZH2, SUZ12, RBBP4 and RBBP7 and possibly AEBP2. The minimum components required for methyltransferase activity of the PRC2/EED-EZH2 complex are EED, EZH2 and SUZ12. The PRC2 complex may also interact with DNMT1, DNMT3A, DNMT3B and PHF1 via the EZH2 subunit and with SIRT1 via the SUZ12 subunit. Interacts with HDAC1 and HDAC2. Binds ATRX via the SET domain. Interacts with PRAME. Interacts with CDYL. Interacts with BMAL1, CLOCK and CRY1. Interacts with DNMT3L; the interaction is direct. Interacts with EZHIP; the interaction blocks EZH2 methyltransferase activity. Interacts with ZNF263; recruited to the SIX3 promoter along with other proteins involved in chromatin modification and transcriptional corepression where it contributes to transcriptional repression. Interacts with ARMC12. Interacts with ZMYND8; the interaction is dependent on the presence of chromatin. Interacts with DDX18; this interaction inhibits the PRC2 complex. Post-translationally, phosphorylated by AKT1. Phosphorylation by AKT1 reduces methyltransferase activity. Phosphorylation at Thr-345 by CDK1 and CDK2 promotes maintenance of H3K27me3 levels at EZH2-target loci, thus leading to epigenetic gene silencing. Sumoylated. In terms of processing, glycosylated: O-GlcNAcylation at Ser-75 by OGT increases stability of EZH2 and facilitates the formation of H3K27me3 by the PRC2/EED-EZH2 complex.

It localises to the nucleus. It catalyses the reaction L-lysyl(27)-[histone H3] + 3 S-adenosyl-L-methionine = N(6),N(6),N(6)-trimethyl-L-lysyl(27)-[histone H3] + 3 S-adenosyl-L-homocysteine + 3 H(+). Polycomb group (PcG) protein. Catalytic subunit of the PRC2/EED-EZH2 complex, which methylates 'Lys-9' (H3K9me) and 'Lys-27' (H3K27me) of histone H3, leading to transcriptional repression of the affected target gene. Able to mono-, di- and trimethylate 'Lys-27' of histone H3 to form H3K27me1, H3K27me2 and H3K27me3, respectively. Displays a preference for substrates with less methylation, loses activity when progressively more methyl groups are incorporated into H3K27, H3K27me0 &gt; H3K27me1 &gt; H3K27me2. Compared to EZH1-containing complexes, it is more abundant in embryonic stem cells and plays a major role in forming H3K27me3, which is required for embryonic stem cell identity and proper differentiation. The PRC2/EED-EZH2 complex may also serve as a recruiting platform for DNA methyltransferases, thereby linking two epigenetic repression systems. EZH2 can also methylate non-histone proteins such as the transcription factor GATA4 and the nuclear receptor RORA. Regulates the circadian clock via histone methylation at the promoter of the circadian genes. Essential for the CRY1/2-mediated repression of the CLOCK-BMAL1 transcriptional activation of PER1/2. Involved in the di and trimethylation of 'Lys-27' of histone H3 on PER1/2 promoters which is necessary for the CRY1/2 proteins to inhibit transcription. This Macaca fascicularis (Crab-eating macaque) protein is Histone-lysine N-methyltransferase EZH2 (EZH2).